The chain runs to 235 residues: Glucosamine-6-phosphate deaminase (235 aa).

The active-site Proton acceptor; for enolization step is Asp62. Asn128 serves as the catalytic For ring-opening step. Residue His130 is the Proton acceptor; for ring-opening step of the active site. The active-site For ring-opening step is the Glu135.

It belongs to the glucosamine/galactosamine-6-phosphate isomerase family. NagB subfamily.

The enzyme catalyses alpha-D-glucosamine 6-phosphate + H2O = beta-D-fructose 6-phosphate + NH4(+). It functions in the pathway amino-sugar metabolism; N-acetylneuraminate degradation; D-fructose 6-phosphate from N-acetylneuraminate: step 5/5. In terms of biological role, catalyzes the reversible isomerization-deamination of glucosamine 6-phosphate (GlcN6P) to form fructose 6-phosphate (Fru6P) and ammonium ion. The chain is Glucosamine-6-phosphate deaminase from Streptococcus pneumoniae serotype 2 (strain D39 / NCTC 7466).